The chain runs to 206 residues: Small ribosomal subunit protein uS4 (206 aa).

The 61-residue stretch at 96–156 (TRLDNVVYRM…EKSKTQARII (61 aa)) folds into the S4 RNA-binding domain.

The protein belongs to the universal ribosomal protein uS4 family. In terms of assembly, part of the 30S ribosomal subunit. Contacts protein S5. The interaction surface between S4 and S5 is involved in control of translational fidelity.

In terms of biological role, one of the primary rRNA binding proteins, it binds directly to 16S rRNA where it nucleates assembly of the body of the 30S subunit. Functionally, with S5 and S12 plays an important role in translational accuracy. The sequence is that of Small ribosomal subunit protein uS4 from Colwellia psychrerythraea (strain 34H / ATCC BAA-681) (Vibrio psychroerythus).